We begin with the raw amino-acid sequence, 228 residues long: UPF0758 protein SAB1521c (228 aa).

In terms of domain architecture, MPN spans 102–224 (KITQPSDVAD…FTSLVEAGYF (123 aa)). Positions 173, 175, and 186 each coordinate Zn(2+). The JAMM motif motif lies at 173–186 (HNHPSGDVTPSQED).

Belongs to the UPF0758 family.

The chain is UPF0758 protein SAB1521c from Staphylococcus aureus (strain bovine RF122 / ET3-1).